Reading from the N-terminus, the 400-residue chain is Phosphoglycerate kinase (400 aa).

Substrate contacts are provided by residues 22 to 24, Arg-38, 61 to 64, Arg-119, and Arg-152; these read DFN and HLGR. Residues Lys-205, Gly-296, Glu-327, and 353–356 contribute to the ATP site; that span reads GGDT.

It belongs to the phosphoglycerate kinase family. Monomer.

Its subcellular location is the cytoplasm. The enzyme catalyses (2R)-3-phosphoglycerate + ATP = (2R)-3-phospho-glyceroyl phosphate + ADP. Its pathway is carbohydrate degradation; glycolysis; pyruvate from D-glyceraldehyde 3-phosphate: step 2/5. The protein is Phosphoglycerate kinase of Campylobacter lari (strain RM2100 / D67 / ATCC BAA-1060).